An 822-amino-acid chain; its full sequence is Probable RING finger protein 207 homolog (822 aa).

The RING-type zinc finger occupies Cys8–Ser42. The B box-type 1; atypical zinc finger occupies Glu68–Ser115. Residues Cys73, Cys76, Cys97, and His102 each coordinate Zn(2+). The segment at Tyr122–Ile164 adopts a B box-type 2; degenerate zinc-finger fold. Coiled coils occupy residues Asn526–Ala558 and Asp738–Glu769.

In Caenorhabditis elegans, this protein is Probable RING finger protein 207 homolog.